We begin with the raw amino-acid sequence, 311 residues long: Ribonuclease HIII (311 aa).

In terms of domain architecture, RNase H type-2 spans 95–311 (MSIVGSDEVG…NTEKAFRLLK (217 aa)). D101, E102, and D206 together coordinate a divalent metal cation.

It belongs to the RNase HII family. RnhC subfamily. Mn(2+) is required as a cofactor. Requires Mg(2+) as cofactor.

The protein resides in the cytoplasm. It catalyses the reaction Endonucleolytic cleavage to 5'-phosphomonoester.. In terms of biological role, endonuclease that specifically degrades the RNA of RNA-DNA hybrids. This chain is Ribonuclease HIII, found in Bacillus cereus (strain ZK / E33L).